We begin with the raw amino-acid sequence, 366 residues long: Chorismate synthase (366 aa).

NADP(+)-binding residues include Arg48 and Arg54. Residues 125–127, 238–239, Gly278, 293–297, and Arg319 each bind FMN; these read RSS, NA, and KPTSS.

This sequence belongs to the chorismate synthase family. In terms of assembly, homotetramer. FMNH2 serves as cofactor.

The catalysed reaction is 5-O-(1-carboxyvinyl)-3-phosphoshikimate = chorismate + phosphate. It participates in metabolic intermediate biosynthesis; chorismate biosynthesis; chorismate from D-erythrose 4-phosphate and phosphoenolpyruvate: step 7/7. Its function is as follows. Catalyzes the anti-1,4-elimination of the C-3 phosphate and the C-6 proR hydrogen from 5-enolpyruvylshikimate-3-phosphate (EPSP) to yield chorismate, which is the branch point compound that serves as the starting substrate for the three terminal pathways of aromatic amino acid biosynthesis. This reaction introduces a second double bond into the aromatic ring system. This is Chorismate synthase from Paraburkholderia phymatum (strain DSM 17167 / CIP 108236 / LMG 21445 / STM815) (Burkholderia phymatum).